The sequence spans 160 residues: Cytochrome b6-f complex subunit 4 (160 aa).

3 consecutive transmembrane segments (helical) span residues 36–56 (LLYIFPVVILGSIACCGGLAV), 95–115 (LLGVVLMAAVPAGLIAVPFIE), and 131–151 (AVFLFGTFVAIWLGIGATFPI).

It belongs to the cytochrome b family. PetD subfamily. As to quaternary structure, the 4 large subunits of the cytochrome b6-f complex are cytochrome b6, subunit IV (17 kDa polypeptide, petD), cytochrome f and the Rieske protein, while the 4 small subunits are petG, petL, petM and petN. The complex functions as a dimer.

Its subcellular location is the plastid. The protein localises to the cyanelle thylakoid membrane. Component of the cytochrome b6-f complex, which mediates electron transfer between photosystem II (PSII) and photosystem I (PSI), cyclic electron flow around PSI, and state transitions. The sequence is that of Cytochrome b6-f complex subunit 4 from Cyanophora paradoxa.